The following is a 358-amino-acid chain: Phospho-N-acetylmuramoyl-pentapeptide-transferase (358 aa).

The next 10 membrane-spanning stretches (helical) occupy residues 24-44 (FRSI…GPWV), 73-93 (TMGG…WADL), 95-115 (NVFI…GFVD), 134-154 (MFWQ…LPGF), 169-189 (ELGI…SNAV), 197-217 (GLAI…CYIA), 233-253 (GAGE…GFLW), 261-281 (VFMG…LAVL), 286-306 (ILLV…IFQV), and 335-355 (KIIV…ISTL).

The protein belongs to the glycosyltransferase 4 family. MraY subfamily. Requires Mg(2+) as cofactor.

It localises to the cell inner membrane. It catalyses the reaction UDP-N-acetyl-alpha-D-muramoyl-L-alanyl-gamma-D-glutamyl-meso-2,6-diaminopimeloyl-D-alanyl-D-alanine + di-trans,octa-cis-undecaprenyl phosphate = di-trans,octa-cis-undecaprenyl diphospho-N-acetyl-alpha-D-muramoyl-L-alanyl-D-glutamyl-meso-2,6-diaminopimeloyl-D-alanyl-D-alanine + UMP. The protein operates within cell wall biogenesis; peptidoglycan biosynthesis. In terms of biological role, catalyzes the initial step of the lipid cycle reactions in the biosynthesis of the cell wall peptidoglycan: transfers peptidoglycan precursor phospho-MurNAc-pentapeptide from UDP-MurNAc-pentapeptide onto the lipid carrier undecaprenyl phosphate, yielding undecaprenyl-pyrophosphoryl-MurNAc-pentapeptide, known as lipid I. The sequence is that of Phospho-N-acetylmuramoyl-pentapeptide-transferase from Citrifermentans bemidjiense (strain ATCC BAA-1014 / DSM 16622 / JCM 12645 / Bem) (Geobacter bemidjiensis).